A 332-amino-acid chain; its full sequence is Glycerol-3-phosphate dehydrogenase [NAD(P)+] (332 aa).

NADPH is bound by residues Ser11, Phe12, Lys32, and Lys106. Positions 106, 137, and 139 each coordinate sn-glycerol 3-phosphate. Ala141 is an NADPH binding site. Positions 192, 245, 255, 256, and 257 each coordinate sn-glycerol 3-phosphate. Residue Lys192 is the Proton acceptor of the active site. Arg256 is a binding site for NADPH. 2 residues coordinate NADPH: Val280 and Glu282.

This sequence belongs to the NAD-dependent glycerol-3-phosphate dehydrogenase family.

The protein localises to the cytoplasm. The catalysed reaction is sn-glycerol 3-phosphate + NAD(+) = dihydroxyacetone phosphate + NADH + H(+). It carries out the reaction sn-glycerol 3-phosphate + NADP(+) = dihydroxyacetone phosphate + NADPH + H(+). It participates in membrane lipid metabolism; glycerophospholipid metabolism. Functionally, catalyzes the reduction of the glycolytic intermediate dihydroxyacetone phosphate (DHAP) to sn-glycerol 3-phosphate (G3P), the key precursor for phospholipid synthesis. This Staphylococcus haemolyticus (strain JCSC1435) protein is Glycerol-3-phosphate dehydrogenase [NAD(P)+].